The sequence spans 455 residues: Bifunctional protein GlmU (455 aa).

Residues 1 to 232 (MASTTGALIL…DPNLLGVNNP (232 aa)) are pyrophosphorylase. UDP-N-acetyl-alpha-D-glucosamine is bound by residues 10–13 (LAAG), K24, Q75, and 80–81 (GT). Residue D106 coordinates Mg(2+). Positions 141, 155, 172, and 230 each coordinate UDP-N-acetyl-alpha-D-glucosamine. Residue N230 coordinates Mg(2+). The interval 233-253 (AELIRSEALLRTRLVIGHIEG) is linker. An N-acetyltransferase region spans residues 254–455 (GVLIHAPETV…QTNLPRKPKA (202 aa)). Residues R336 and K354 each contribute to the UDP-N-acetyl-alpha-D-glucosamine site. Residue H366 is the Proton acceptor of the active site. Positions 369 and 380 each coordinate UDP-N-acetyl-alpha-D-glucosamine. Acetyl-CoA contacts are provided by residues A383, 389 to 390 (NY), S408, A426, and R443.

It in the N-terminal section; belongs to the N-acetylglucosamine-1-phosphate uridyltransferase family. This sequence in the C-terminal section; belongs to the transferase hexapeptide repeat family. As to quaternary structure, homotrimer. Mg(2+) is required as a cofactor.

The protein resides in the cytoplasm. It catalyses the reaction alpha-D-glucosamine 1-phosphate + acetyl-CoA = N-acetyl-alpha-D-glucosamine 1-phosphate + CoA + H(+). The catalysed reaction is N-acetyl-alpha-D-glucosamine 1-phosphate + UTP + H(+) = UDP-N-acetyl-alpha-D-glucosamine + diphosphate. Its pathway is nucleotide-sugar biosynthesis; UDP-N-acetyl-alpha-D-glucosamine biosynthesis; N-acetyl-alpha-D-glucosamine 1-phosphate from alpha-D-glucosamine 6-phosphate (route II): step 2/2. It participates in nucleotide-sugar biosynthesis; UDP-N-acetyl-alpha-D-glucosamine biosynthesis; UDP-N-acetyl-alpha-D-glucosamine from N-acetyl-alpha-D-glucosamine 1-phosphate: step 1/1. It functions in the pathway bacterial outer membrane biogenesis; LPS lipid A biosynthesis. Functionally, catalyzes the last two sequential reactions in the de novo biosynthetic pathway for UDP-N-acetylglucosamine (UDP-GlcNAc). The C-terminal domain catalyzes the transfer of acetyl group from acetyl coenzyme A to glucosamine-1-phosphate (GlcN-1-P) to produce N-acetylglucosamine-1-phosphate (GlcNAc-1-P), which is converted into UDP-GlcNAc by the transfer of uridine 5-monophosphate (from uridine 5-triphosphate), a reaction catalyzed by the N-terminal domain. This is Bifunctional protein GlmU from Nitratidesulfovibrio vulgaris (strain ATCC 29579 / DSM 644 / CCUG 34227 / NCIMB 8303 / VKM B-1760 / Hildenborough) (Desulfovibrio vulgaris).